Consider the following 424-residue polypeptide: Enolase (424 aa).

Gln-162 contacts (2R)-2-phosphoglycerate. The active-site Proton donor is the Glu-204. 3 residues coordinate Mg(2+): Asp-241, Glu-284, and Asp-311. 4 residues coordinate (2R)-2-phosphoglycerate: Lys-336, Arg-365, Ser-366, and Lys-387. Catalysis depends on Lys-336, which acts as the Proton acceptor.

Belongs to the enolase family. It depends on Mg(2+) as a cofactor.

Its subcellular location is the cytoplasm. The protein localises to the secreted. It is found in the cell surface. It carries out the reaction (2R)-2-phosphoglycerate = phosphoenolpyruvate + H2O. It functions in the pathway carbohydrate degradation; glycolysis; pyruvate from D-glyceraldehyde 3-phosphate: step 4/5. Functionally, catalyzes the reversible conversion of 2-phosphoglycerate (2-PG) into phosphoenolpyruvate (PEP). It is essential for the degradation of carbohydrates via glycolysis. This is Enolase from Rhizobium etli (strain ATCC 51251 / DSM 11541 / JCM 21823 / NBRC 15573 / CFN 42).